The chain runs to 254 residues: Adenosine 5'-phosphosulfate reductase (254 aa).

[4Fe-4S] cluster-binding residues include cysteine 140, cysteine 141, cysteine 223, and cysteine 226. Cysteine 249 acts as the Nucleophile; cysteine thiosulfonate intermediate in catalysis.

It belongs to the PAPS reductase family. CysH subfamily. [4Fe-4S] cluster serves as cofactor.

It localises to the cytoplasm. The catalysed reaction is [thioredoxin]-disulfide + sulfite + AMP + 2 H(+) = adenosine 5'-phosphosulfate + [thioredoxin]-dithiol. It functions in the pathway sulfur metabolism; hydrogen sulfide biosynthesis; sulfite from sulfate. Catalyzes the formation of sulfite from adenosine 5'-phosphosulfate (APS) using thioredoxin as an electron donor. In Mycobacterium bovis (strain ATCC BAA-935 / AF2122/97), this protein is Adenosine 5'-phosphosulfate reductase.